Reading from the N-terminus, the 381-residue chain is Heterogeneous nuclear rnp K-like protein 2 (381 aa).

The interval 1–34 is disordered; that stretch reads MSQFFEAATPVAIPTNNTNGGSSDAGSAATGGAP. Residues 15-33 show a composition bias toward low complexity; that stretch reads TNNTNGGSSDAGSAATGGA. 3 consecutive KH domains span residues 43-107, 156-221, and 258-326; these read TINH…IGDI, IGYV…LIEI, and NTRI…ESML. The interval 357 to 381 is disordered; that stretch reads RSDSASFLEEKEEPQKNHDNKEEQS. Phosphoserine is present on residues S358, S360, and S362. Over residues 369-381 the composition is skewed to basic and acidic residues; the sequence is EPQKNHDNKEEQS.

This sequence belongs to the HEK2 family. As to quaternary structure, binds RNA. Phosphorylated by the plasma membrane-Anchored casein kinase YCK1. Phosphorylation at its C-terminus reduces its RNA-binding capacity.

It is found in the cytoplasm. It localises to the P-body. The protein localises to the nucleus. Its subcellular location is the chromosome. The protein resides in the telomere. Its function is as follows. RNA-binding protein involved in the correct localization of transcripts in the cell. RNA localization is a widespread mechanism for achieving localized protein synthesis. Required for the asymmetric localization to the daughter cell nucleus of the ASH1 transcript, coding for a specific repressor of transcription. Overexpression inhibits translation of the ASH1 transcript. Involved in the stability of transcripts, like the MTL1 mRNA. Involved in structural and functional organization of telomeric chromatin and regulates silencing at the HMR locus. In Saccharomyces cerevisiae (strain RM11-1a) (Baker's yeast), this protein is Heterogeneous nuclear rnp K-like protein 2 (HEK2).